Consider the following 260-residue polypeptide: Universal stress protein PHOS34 (260 aa).

The N-terminal 33 residues, 1 to 33, are a transit peptide targeting the chloroplast; that stretch reads MNPDSDYPHLPNIKIHHPSSPRHSHHHSSSTPS. The interval 1–42 is disordered; sequence MNPDSDYPHLPNIKIHHPSSPRHSHHHSSSTPSAATPTPTAG. A compositionally biased stretch (basic residues) spans 14–28; the sequence is KIHHPSSPRHSHHHS. Pro18 serves as a coordination point for ATP. A Phosphoserine; by MAPK3 and MAPK6 modification is found at Ser20. Low complexity predominate over residues 29–41; it reads SSTPSAATPTPTA. Val80 is a binding site for ATP. The disordered stretch occupies residues 92 to 118; the sequence is GPLPLQTPPPPSAATDPGAQPKPSQED. Residues 170–179 and 187–189 contribute to the ATP site; these read GSRGFGAEKR and SVS. Residues 209–260 form a disordered region; it reads RDGPAPPGNVGATREAIVTVKSRRDDDDDDDEDHEAKIAAAASDHHEHIKDE. Ser230 is modified (phosphoserine). A compositionally biased stretch (basic and acidic residues) spans 251–260; it reads SDHHEHIKDE.

The protein belongs to the universal stress protein A family. Post-translationally, phosphorylated by MAPK3 and MAPK6 after pathogenic elicitation (e.g. bacterial flg22, Phytophthora infestans zoospores and xylanase).

The protein localises to the plastid. Its subcellular location is the chloroplast. This Arabidopsis thaliana (Mouse-ear cress) protein is Universal stress protein PHOS34.